Consider the following 242-residue polypeptide: Probable transcriptional regulatory protein NGO_1291 (242 aa).

It belongs to the TACO1 family.

Its subcellular location is the cytoplasm. In Neisseria gonorrhoeae (strain ATCC 700825 / FA 1090), this protein is Probable transcriptional regulatory protein NGO_1291.